A 36-amino-acid chain; its full sequence is Egg-laying-like hormone (36 aa).

The residue at position 36 (lysine 36) is a Lysine amide.

In terms of tissue distribution, supra, subesophageal ganglia and segmental ganglia of the ventral nerve cord and brain.

May be involved in leech reproduction. The sequence is that of Egg-laying-like hormone from Theromyzon tessulatum (Duck leech).